The following is a 781-amino-acid chain: DEAD-box ATP-dependent RNA helicase 50 (781 aa).

5 disordered regions span residues 72–103 (EFAP…LTAS), 117–148 (GKVT…DEGF), 166–240 (IPRS…KGDR), 254–292 (GRAI…REDR), and 313–342 (YNPR…RGWG). Over residues 79 to 88 (SDLLSSIPSE) the composition is skewed to low complexity. Acidic residues predominate over residues 130–143 (EEEDEDDASDENYS). Residues 171 to 197 (KSAERNEVKRASKVRESRESRRDLDRL) are compositionally biased toward basic and acidic residues. Residues 198-208 (EGDDEDVDEVS) show a composition bias toward acidic residues. The span at 216–226 (NQRAGSRSSYS) shows a compositional bias: polar residues. The span at 254–274 (GRAIDEVSNPRKFNDNERAES) shows a compositional bias: basic and acidic residues. Over residues 275-286 (RSSYSRDSSANS) the composition is skewed to low complexity. The segment covering 313–325 (YNPRRFTDNERGL) has biased composition (basic and acidic residues). The Q motif signature appears at 374–402 (KTFAEIGCSEDMMKALKEQNFDRPAHIQA). Residues 405–586 (FSPVIDGKSC…VEVFPDCEVV (182 aa)) form the Helicase ATP-binding domain. Residue 418-425 (DQSGSGKT) coordinates ATP. Residues 533–536 (DEVD) carry the DEAD box motif. The Helicase C-terminal domain maps to 621-781 (NKKTALLQIM…DVPNAYEFTT (161 aa)).

It belongs to the DEAD box helicase family.

It catalyses the reaction ATP + H2O = ADP + phosphate + H(+). Functionally, probably involved in resistance to biotic and abiotic stresses. In Arabidopsis thaliana (Mouse-ear cress), this protein is DEAD-box ATP-dependent RNA helicase 50 (RH50).